We begin with the raw amino-acid sequence, 288 residues long: Proteasome assembly chaperone 1 (288 aa).

N-acetylalanine is present on A2. The disordered stretch occupies residues 13–35; the sequence is PCRAGTEDEEEEEEGRRETPEDR. Position 18 is a phosphothreonine (T18). Positions 26-35 are enriched in basic and acidic residues; that stretch reads EGRRETPEDR. T54 is modified (phosphothreonine). A Phosphoserine modification is found at S180. K264 carries the N6-acetyllysine modification.

Belongs to the PSMG1 family. As to quaternary structure, forms a heterodimer with PSMG2. The PSMG1-PSMG2 heterodimer interacts directly with the PSMA5 and PSMA7 proteasome alpha subunits. Degraded by the proteasome upon completion of 20S proteasome maturation. In the adult, detected in brain, colon, leukocytes, breast and testis. Widely expressed in the fetus. Also expressed in a variety of proliferating cell lines.

The protein localises to the cytoplasm. The protein resides in the endoplasmic reticulum. Its function is as follows. Chaperone protein which promotes assembly of the 20S proteasome as part of a heterodimer with PSMG2. The PSMG1-PSMG2 heterodimer binds to the PSMA5 and PSMA7 proteasome subunits, promotes assembly of the proteasome alpha subunits into the heteroheptameric alpha ring and prevents alpha ring dimerization. The sequence is that of Proteasome assembly chaperone 1 from Homo sapiens (Human).